The chain runs to 424 residues: CinA-like protein (424 aa).

The protein belongs to the CinA family.

The chain is CinA-like protein from Shewanella denitrificans (strain OS217 / ATCC BAA-1090 / DSM 15013).